Reading from the N-terminus, the 78-residue chain is Conotoxin 6 (78 aa).

The signal sequence occupies residues 1-22 (MKLTCMMIVAVLFLTAWIFITA). The propeptide occupies 23–51 (DNSRNGIENLPRMRRHEMKNPKASKLNKR). 3 cysteine pairs are disulfide-bonded: Cys-53–Cys-69, Cys-60–Cys-73, and Cys-68–Cys-77.

This sequence belongs to the conotoxin O1 superfamily. Expressed by the venom duct.

It is found in the secreted. In Conus imperialis (Imperial cone), this protein is Conotoxin 6.